A 676-amino-acid chain; its full sequence is Protein timeless (676 aa).

Positions 77–108 (VNTLQKLLNLWFEASLSESSEDNESNTSPPKK) are necessary for normal circadian rhythm. 2 disordered regions span residues 94 to 145 (ESSE…CDER) and 346 to 398 (PESI…LVKR). Composition is skewed to low complexity over residues 101 to 129 (SNTSPPKKGSGDSSPMLTSDPTSDSSDNG) and 360 to 369 (QGKPQHQKPP). Residues 388–398 (KELRRKKLVKR) carry the Nuclear localization signal motif.

Belongs to the timeless family. Forms a heterodimer with period (PER); the complex then translocates into the nucleus. In terms of processing, phosphorylated with a circadian rhythmicity.

The protein localises to the nucleus. The protein resides in the cytoplasm. It localises to the perinuclear region. Required for the production of circadian rhythms. The biological cycle depends on the rhythmic formation and nuclear localization of the TIM-PER complex. Light induces the degradation of TIM, which promotes elimination of PER. Nuclear activity of the heterodimer coordinatively regulates PER and TIM transcription through a negative feedback loop. Behaves as a negative element in circadian transcriptional loop. Does not appear to bind DNA, suggesting indirect transcriptional inhibition. The polypeptide is Protein timeless (tim) (Drosophila hydei (Fruit fly)).